Here is a 63-residue protein sequence, read N- to C-terminus: Putative transmembrane protein ORF63 (63 aa).

The Extracellular portion of the chain corresponds to 1–8 (MQSGNFTL). The chain crosses the membrane as a helical span at residues 9–29 (EVIMYLINSILAFIMIFFTFV). At 30–31 (NP) the chain is on the cytoplasmic side. Residues 32–52 (SLLKCQYWTYILVALITAIIF) form a helical membrane-spanning segment. Residues 53 to 63 (HTGSKVGKSSG) are Extracellular-facing.

The protein localises to the host membrane. The chain is Putative transmembrane protein ORF63 from Acidianus filamentous virus 1 (isolate United States/Yellowstone) (AFV-1).